Here is a 329-residue protein sequence, read N- to C-terminus: Ribonucleoside-diphosphate reductase subunit beta (329 aa).

Fe cation-binding residues include aspartate 66, glutamate 97, and histidine 101. Tyrosine 105 is a catalytic residue. 3 residues coordinate Fe cation: glutamate 164, glutamate 198, and histidine 201.

Belongs to the ribonucleoside diphosphate reductase small chain family. In terms of assembly, tetramer of two alpha and two beta subunits. Fe cation serves as cofactor.

The catalysed reaction is a 2'-deoxyribonucleoside 5'-diphosphate + [thioredoxin]-disulfide + H2O = a ribonucleoside 5'-diphosphate + [thioredoxin]-dithiol. Functionally, provides the precursors necessary for DNA synthesis. Catalyzes the biosynthesis of deoxyribonucleotides from the corresponding ribonucleotides. In Bacillus pumilus (Bacillus mesentericus), this protein is Ribonucleoside-diphosphate reductase subunit beta (bnrdF).